The following is an 806-amino-acid chain: Phenylalanine--tRNA ligase beta subunit (806 aa).

A tRNA-binding domain is found at S39–Y154. Residues P410–S485 enclose the B5 domain. D463, D469, E472, and E473 together coordinate Mg(2+). The region spanning P713 to R806 is the FDX-ACB domain.

It belongs to the phenylalanyl-tRNA synthetase beta subunit family. Type 1 subfamily. In terms of assembly, tetramer of two alpha and two beta subunits. It depends on Mg(2+) as a cofactor.

It is found in the cytoplasm. It carries out the reaction tRNA(Phe) + L-phenylalanine + ATP = L-phenylalanyl-tRNA(Phe) + AMP + diphosphate + H(+). This chain is Phenylalanine--tRNA ligase beta subunit, found in Latilactobacillus sakei subsp. sakei (strain 23K) (Lactobacillus sakei subsp. sakei).